Here is a 1477-residue protein sequence, read N- to C-terminus: Putative insulin-like peptide receptor (1477 aa).

Positions 1–24 are cleaved as a signal peptide; that stretch reads MMRNVQSFYFLFLLIVLNFHVVLS. Residues 25 to 980 are Extracellular-facing; sequence AVCIGQRATT…LSVTKNNNQL (956 aa). N-linked (GlcNAc...) asparagine glycans are attached at residues Asn-55, Asn-255, Asn-300, Asn-325, Asn-457, Asn-491, Asn-549, Asn-644, Asn-732, Asn-791, Asn-874, Asn-895, and Asn-957. Fibronectin type-III domains lie at 652–750 and 780–869; these read EPLG…IKAD and NKSP…IVQA. The 92-residue stretch at 880–971 folds into the Fibronectin type-III 3 domain; it reads LDSKMVRVQV…EEIHFKVAEL (92 aa). Residues 981–1001 traverse the membrane as a helical segment; sequence IIGIISAVSAVIVALLVFILL. Residues 1002–1477 are Cytoplasmic-facing; the sequence is YMFLHRKLEK…EIFYGKPIPV (476 aa). Positions 1044-1315 constitute a Protein kinase domain; it reads IELIRELGQG…LENEVDDDFV (272 aa). ATP contacts are provided by residues 1050–1058 and Lys-1077; that span reads LGQGSFGMV. Asp-1175 acts as the Proton acceptor in catalysis. Tyr-1201 bears the Phosphotyrosine; by autocatalysis mark. 2 disordered regions span residues 1350-1376 and 1391-1421; these read YTKGDGNMQNMLSRSQNRKSAIEKSKE and KYDANDTPEEIPKKKKRPRSKRNSAVDSNAC. Residues 1356–1368 are compositionally biased toward polar residues; that stretch reads NMQNMLSRSQNRK. Residues 1403 to 1412 are compositionally biased toward basic residues; the sequence is KKKKRPRSKR.

The protein belongs to the protein kinase superfamily. Tyr protein kinase family. Insulin receptor subfamily. Requires Mn(2+) as cofactor. Expressed in dividing epithelial cells.

The protein resides in the membrane. It catalyses the reaction L-tyrosyl-[protein] + ATP = O-phospho-L-tyrosyl-[protein] + ADP + H(+). This receptor probably binds an insulin related protein and has a tyrosine-protein kinase activity. The chain is Putative insulin-like peptide receptor (HTK7) from Hydra vulgaris (Hydra).